The sequence spans 49 residues: Large ribosomal subunit protein bL33 (49 aa).

This sequence belongs to the bacterial ribosomal protein bL33 family.

The sequence is that of Large ribosomal subunit protein bL33 from Syntrophobacter fumaroxidans (strain DSM 10017 / MPOB).